Here is a 208-residue protein sequence, read N- to C-terminus: FMN-dependent NADH:quinone oxidoreductase 1 (208 aa).

FMN is bound by residues S10, 15-17 (SES), and 97-100 (MWNF).

This sequence belongs to the azoreductase type 1 family. In terms of assembly, homodimer. It depends on FMN as a cofactor.

The catalysed reaction is 2 a quinone + NADH + H(+) = 2 a 1,4-benzosemiquinone + NAD(+). It carries out the reaction N,N-dimethyl-1,4-phenylenediamine + anthranilate + 2 NAD(+) = 2-(4-dimethylaminophenyl)diazenylbenzoate + 2 NADH + 2 H(+). Quinone reductase that provides resistance to thiol-specific stress caused by electrophilic quinones. In terms of biological role, also exhibits azoreductase activity. Catalyzes the reductive cleavage of the azo bond in aromatic azo compounds to the corresponding amines. This Bradyrhizobium diazoefficiens (strain JCM 10833 / BCRC 13528 / IAM 13628 / NBRC 14792 / USDA 110) protein is FMN-dependent NADH:quinone oxidoreductase 1.